A 206-amino-acid chain; its full sequence is 2-oxoglutarate-dependent dioxygenase iboH (206 aa).

The 107-residue stretch at 51 to 157 folds into the Fe2OG dioxygenase domain; the sequence is PSTTTLVLLH…RYSIAYFLRP (107 aa). Fe cation contacts are provided by H75, D77, and H134. R148 is a 2-oxoglutarate binding site.

The protein belongs to the iron/ascorbate-dependent oxidoreductase family. Fe(2+) serves as cofactor.

It carries out the reaction L-glutamate + 2-oxoglutarate + O2 = (3R)-3-hydroxy-L-glutamate + succinate + CO2. It functions in the pathway secondary metabolite biosynthesis. In terms of biological role, 2-oxoglutarate-dependent dioxygenase; part of the gene cluster that mediates the biosynthesis of the psychoactive metabolites ibotenic acid and muscimol. The first committed step is glutamate hydroxylation by the 2-oxoglutarate-dependent dioxygenase iboH, and the last step is decarboxylation of ibotenic acid to muscimol by the decarboxylase iboD. The order of the intermediate reactions is somewhat ambiguous. IboA likely activates the carboxylic acid at position 5 to introduce an amide bond, and the flavin monooxygenase iboF generates the N-O bond. There are several options for the latter step. One option is that iboF directly hydroxylates the amide nitrogen formed by iboA to produce a hydroxamic acid species. Another option is that iboF hydroxylates an external N-containing compound, whose resulting N-O bond is subsequently introduced into the hydroxyglutamate scaffold. The paralogous PLP-dependent cystathionine gamma-synthase-like enzymes iboG1 and iboG2 are likely involved in substitution of the OH group at position 3 by the O-N moiety. The first cyclic intermediate is most probably tricholomic acid which is likely desaturated to ibotenic acid by the cytochrome P450 monooxygenase iboC. The polypeptide is 2-oxoglutarate-dependent dioxygenase iboH (Amanita muscaria (strain Koide BX008)).